The chain runs to 1082 residues: Inner tegument protein (1082 aa).

The segment at Asp-604–Phe-1082 is interaction with large tegument protein.

This sequence belongs to the herpesviridae inner tegument protein family. Interacts (via C-terminus) with the large tegument protein/LTP (via N-terminus).

The protein localises to the virion tegument. The protein resides in the host cytoplasm. It localises to the host nucleus. It is found in the host Golgi apparatus. Its subcellular location is the host trans-Golgi network. Functionally, plays an essential role in cytoplasmic secondary envelopment during viral egress. Interacts with the capsid via the large tegument protein/LTP and participates in its transport to the host trans-Golgi network (TGN) where secondary envelopment occurs. Modulates tegumentation and capsid accumulation at the viral assembly complex. This Homo sapiens (Human) protein is Inner tegument protein (U30).